The sequence spans 88 residues: Cell division topological specificity factor (88 aa).

Belongs to the MinE family.

Prevents the cell division inhibition by proteins MinC and MinD at internal division sites while permitting inhibition at polar sites. This ensures cell division at the proper site by restricting the formation of a division septum at the midpoint of the long axis of the cell. This Psychromonas ingrahamii (strain DSM 17664 / CCUG 51855 / 37) protein is Cell division topological specificity factor.